A 650-amino-acid polypeptide reads, in one-letter code: DNA-directed RNA polymerase III subunit rpc3 (650 aa).

Disordered regions lie at residues 133-163 (PTAVNGNHEQPEKEIEGEGVEGEGIEEEGHT), 264-283 (RGAKRRRGPGGAERSNKKAR), 288-313 (AVDEDEEEEEENEWSEDEMGGDNIPM), and 400-440 (LAGS…SSDG). Positions 149–158 (GEGVEGEGIE) are enriched in acidic residues. The span at 288-307 (AVDEDEEEEEENEWSEDEMG) shows a compositional bias: acidic residues. Positions 577–598 (TYKSMSRCLQRLRFERNRLKEF) are leucine-zipper.

The protein belongs to the RNA polymerase beta chain family. As to quaternary structure, component of the RNA polymerase III (Pol III) complex consisting of 17 subunits.

It localises to the nucleus. Functionally, DNA-dependent RNA polymerase catalyzes the transcription of DNA into RNA using the four ribonucleoside triphosphates as substrates. Specific core component of RNA polymerase III which synthesizes small RNAs, such as 5S rRNA and tRNAs. The protein is DNA-directed RNA polymerase III subunit rpc3 (rpc82) of Aspergillus terreus (strain NIH 2624 / FGSC A1156).